Consider the following 1040-residue polypeptide: Exosome RNA helicase MTR4 (1040 aa).

The residue at position 2 (Ala2) is an N-acetylalanine. Residues 16 to 77 are disordered; that stretch reads DSTSAAGAKK…GTDEPIFGKK (62 aa). Positions 23-33 are enriched in basic and acidic residues; that stretch reads AKKDKEKEKWK. Lys24 participates in a covalent cross-link: Glycyl lysine isopeptide (Lys-Gly) (interchain with G-Cter in SUMO2). A Phosphoserine modification is found at Ser38. Residues 41–50 are compositionally biased toward basic and acidic residues; the sequence is KAGKRLDTKL. An N6-acetyllysine mark is found at Lys49 and Lys76. ATP-binding positions include Ile137, 159–166, Ser162, Gly164, Lys165, and Thr166; that span reads AHTSAGKT. A Helicase ATP-binding domain is found at 146–302; that stretch reads IQCVDNNQSV…WICHLHKQPC (157 aa). The DEIH box motif lies at 250 to 253; sequence DEIH. Lys356 is covalently cross-linked (Glycyl lysine isopeptide (Lys-Gly) (interchain with G-Cter in SUMO2)). Residues 403-575 form the Helicase C-terminal domain; sequence QMTKLDFNTD…NMVLNLLRVE (173 aa). Glycyl lysine isopeptide (Lys-Gly) (interchain with G-Cter in SUMO2) cross-links involve residues Lys682 and Lys721.

This sequence belongs to the helicase family. SKI2 subfamily. As to quaternary structure, component of a TRAMP-like complex, an ATP-dependent exosome regulatory complex consisting of a helicase (MTREX), an oligadenylate polymerase (TENT4B or TENT4A), and a substrate specific RNA-binding factor (ZCCHC7 or ZCCHC8). Several TRAMP-like complexes exist with specific compositions and are associated with nuclear, or nucleolar RNA exosomes. Identified in the spliceosome C complex. Component of the poly(A) tail exosome targeting (PAXT) complex made of PABPN1, ZFC3H1 and MTREX that directs a subset of long and polyadenylated poly(A) RNAs for exosomal degradation. Component of the nuclear exosome targeting (NEXT) complex composed of MTREX, ZCCHC8, and RBM7 that directs a subset of non-coding short-lived RNAs for exosomal degradation. Interacts with ZCCHC8; this interaction bridges the interaction between RBM7 and MTREX. Binds to ZFC3H1 and RBM7 in a RNase-insensitive manner. Interacts with EXOSC10; the interaction mediates the association of MTREX with nuclear RNA exosomes. Interacts with isoform 1 of NVL in an ATP-dependent manner; the interaction is required to associate NVL with nuclear RNA exosome. Interacts with WDR74; the interaction dissociation in a late stage of rRNA synthesis is required for appropriate maturation of pre-60S particles and depends on the ATPase activity of NVL. Interacts with MPHOSPH6. Interacts with the RNA cap-binding complex proteins NCBP1 and SRRT. Interacts with NRDE2; the interaction is direct and negatively regulates MTREX function in exosomal degradation by changing its conformation precluding interaction with ZFC3H1, the RNA cap-binding complex proteins NCBP1 and SRRT, and association with the exosome. Associates with the RNA exosome complex.

It localises to the nucleus. It is found in the nucleoplasm. The protein localises to the nucleolus. The protein resides in the nucleus speckle. The enzyme catalyses ATP + H2O = ADP + phosphate + H(+). Activated when MTREX is incorporated into NEXT complex an the nuclear RNA exosome complex. In terms of biological role, catalyzes the ATP-dependent unwinding of RNA duplexes with a single-stranded 3' RNA extension. Central subunit of many protein complexes, namely TRAMP-like, nuclear exosome targeting (NEXT) and poly(A) tail exosome targeting (PAXT). NEXT functions as an RNA exosome cofactor that directs a subset of non-coding short-lived RNAs for exosomal degradation. NEXT is involved in surveillance and turnover of aberrant transcripts and non-coding RNAs. PAXT directs a subset of long and polyadenylated poly(A) RNAs for exosomal degradation. The RNA exosome is fundamental for the degradation of RNA in eukaryotic nuclei. Substrate targeting is facilitated by its cofactor ZCCHC8, which links to RNA-binding protein adapters. Associated with the RNA exosome complex and involved in the 3'-processing of the 7S pre-RNA to the mature 5.8S rRNA. May be involved in pre-mRNA splicing. In the context of NEXT complex can also in vitro unwind DNA:RNA heteroduplexes with a 3' poly (A) RNA tracking strand. Can promote unwinding and degradation of structured RNA substrates when associated with the nuclear exosome and its cofactors. Can displace a DNA strand while translocating on RNA to ultimately degrade the RNA within a DNA/RNA heteroduplex. Plays a role in DNA damage response. The protein is Exosome RNA helicase MTR4 of Mus musculus (Mouse).